A 354-amino-acid chain; its full sequence is Methylthioribose-1-phosphate isomerase (354 aa).

Substrate contacts are provided by residues 49 to 51, arginine 92, and glutamine 199; that span reads RGA. Aspartate 240 (proton donor) is an active-site residue. Substrate is bound at residue 250-251; that stretch reads NK.

It belongs to the eIF-2B alpha/beta/delta subunits family. MtnA subfamily.

The enzyme catalyses 5-(methylsulfanyl)-alpha-D-ribose 1-phosphate = 5-(methylsulfanyl)-D-ribulose 1-phosphate. Its pathway is amino-acid biosynthesis; L-methionine biosynthesis via salvage pathway; L-methionine from S-methyl-5-thio-alpha-D-ribose 1-phosphate: step 1/6. Its function is as follows. Catalyzes the interconversion of methylthioribose-1-phosphate (MTR-1-P) into methylthioribulose-1-phosphate (MTRu-1-P). This Koribacter versatilis (strain Ellin345) protein is Methylthioribose-1-phosphate isomerase.